Consider the following 319-residue polypeptide: MKRIGVLTSGGDSPGMNAAIRSVVRKAIYHGVEVYGVYHGYAGLIAGNIKKLEVGDVGDIIHRGGTILYTARCPEFKTEEGQKKGIEQLKKHGIEGLVVIGGDGSYQGAKKLTEHGFPCVGVPGTIDNDIPGTDFTIGFDTALNTVIDAIDKIRDTATSHERTYVIEVMGRHAGDIALWSGLAGGAETILIPEADYDMNDVIARLKRGHERGKKHSIIIVAEGVGSGVDFGRQIQEATGFETRVTVLGHVQRGGSPTAFDRVLASRLGARAVELLLEGKGGRCVGIQNNQLVDHDIAEALANKHTIDQRMYALSKELSI.

Position 11 (Gly-11) interacts with ATP. ADP-binding positions include 21 to 25 (RSVVR) and Asp-59. ATP contacts are provided by residues 72–73 (RC) and 102–105 (GDGS). Residue Asp-103 coordinates Mg(2+). 125-127 (TID) provides a ligand contact to substrate. Asp-127 serves as the catalytic Proton acceptor. Arg-154 serves as a coordination point for ADP. Residues Arg-162 and 169 to 171 (MGR) each bind substrate. Residues 185 to 187 (GAE), Arg-211, and 213 to 215 (KKH) contribute to the ADP site. Residues Glu-222, Arg-243, and 249–252 (HVQR) each bind substrate.

The protein belongs to the phosphofructokinase type A (PFKA) family. ATP-dependent PFK group I subfamily. Prokaryotic clade 'B1' sub-subfamily. As to quaternary structure, homotetramer. It depends on Mg(2+) as a cofactor.

Its subcellular location is the cytoplasm. It carries out the reaction beta-D-fructose 6-phosphate + ATP = beta-D-fructose 1,6-bisphosphate + ADP + H(+). Its pathway is carbohydrate degradation; glycolysis; D-glyceraldehyde 3-phosphate and glycerone phosphate from D-glucose: step 3/4. Its activity is regulated as follows. Allosterically activated by ADP and other diphosphonucleosides, and allosterically inhibited by phosphoenolpyruvate. In terms of biological role, catalyzes the phosphorylation of D-fructose 6-phosphate to fructose 1,6-bisphosphate by ATP, the first committing step of glycolysis. In Geobacillus stearothermophilus (Bacillus stearothermophilus), this protein is ATP-dependent 6-phosphofructokinase.